Reading from the N-terminus, the 250-residue chain is MCDQQKQPQFPPSCVKGSGLGAGQGSNGASVKCPVPCQTQTVCVTGPAPCPTQTYVKYQVPCQTQTYVKCPAPCQRTYVKYPTPCQTYVKCPAPCQTTYVKCPTPCQTYVKCPAPCQMTYIKSPAPCQTQTCYVQGASPCQSYYVQAPASGSTSQYCVTDPCSAPCSTSYCCLAPRTFGVSPLRRWIQRPQNCNTGSSGCCENSGSSGCCGSGGCGCSCGCGSSGCCCLGIIPMRSRGPACCDHEDDCCC.

Skin-specific.

This Homo sapiens (Human) protein is Protein KPLCE.